A 423-amino-acid chain; its full sequence is MVTTHHLCLLRSTVLSVPVRLRAPRAPPHPRLPTASASASSYHGPTHLRRLRPLRAAAAAAGGASPDGADGAKRPAPAAASSSLGAALVGFARSNFLPLALIAGIALALMDPTLGCLAHKYSLSKYSTFGIFLISGLTLRTKELGAALEAWPAGLFGLASILLFTPFLAQFIMQIKFFPHEFITGLAMFCCMPTTLSSGVTLTQLVGGNTALALAMTAISNLLGIMIVPLSLAKYIGVGAGVSLPTEKLFKSLVTTLLIPIILGKVARETSKGIAGFVDGNKQGFSVTSAILLSLVPWIQVSRSRSLLLSVQPKAFAVAVTVGVLLHFALLAFNAAALHILSRLEQRGVSVFARNEYARAVILVASQKTLPVLVAVVEQLGGALGESGLLVIPCVAAHINQIIIDSIIVNWWRQRDQQFANAK.

Residues 1 to 55 (MVTTHHLCLLRSTVLSVPVRLRAPRAPPHPRLPTASASASSYHGPTHLRRLRPLR) constitute a chloroplast transit peptide. Residues 23–45 (APRAPPHPRLPTASASASSYHGP) form a disordered region. Transmembrane regions (helical) follow at residues 96 to 116 (FLPL…TLGC), 123 to 140 (LSKY…LTLR), 153 to 173 (AGLF…QFIM), 182 to 202 (FITG…GVTL), 212 to 232 (LALA…PLSL), 244 to 264 (LPTE…IILG), 284 to 301 (GFSV…WIQV), 315 to 335 (AFAV…AFNA), and 389 to 409 (LLVI…SIIV).

It belongs to the bile acid:sodium symporter (BASS) (TC 2.A.28) family.

The protein localises to the membrane. The protein resides in the plastid. Its subcellular location is the chloroplast envelope. May function as sodium-coupled metabolite transporter across the chloroplast envelope. This Oryza sativa subsp. indica (Rice) protein is Probable sodium/metabolite cotransporter BASS4, chloroplastic (BASS4).